The following is a 220-amino-acid chain: 26S proteasome non-ATPase regulatory subunit 9 (220 aa).

Coiled-coil stretches lie at residues 4 to 32 (GTTT…GQIL) and 61 to 91 (RLAR…YHSE). The region spanning 102-200 (RASALDLDSD…QLDLILVPKT (99 aa)) is the PDZ domain.

This sequence belongs to the proteasome subunit p27 family. Interacts with PI31; this interaction is increased by PI31 ADP-ribosylation. Interacts with Rpt5.

In terms of biological role, acts as a chaperone during the assembly of the 26S proteasome, specifically of the base subcomplex of the PA700/19S regulatory complex (RC). This is 26S proteasome non-ATPase regulatory subunit 9 from Drosophila melanogaster (Fruit fly).